The following is a 390-amino-acid chain: GTPase Obg (390 aa).

Positions 1–159 constitute an Obg domain; sequence MKFVDEASIL…RDLLLELMLL (159 aa). A disordered region spans residues 127–147; it reads NTRFKSSVNRTPRQKTNGTPG. Residues 129–145 show a composition bias toward polar residues; sequence RFKSSVNRTPRQKTNGT. The OBG-type G domain maps to 160-333; sequence ADVGMLGMPN…LCWDVMTFII (174 aa). GTP-binding positions include 166–173, 191–195, 213–216, 283–286, and 314–316; these read GMPNAGKS, FTTLV, DIPG, NKID, and SAA. Residues S173 and T193 each contribute to the Mg(2+) site.

Belongs to the TRAFAC class OBG-HflX-like GTPase superfamily. OBG GTPase family. In terms of assembly, monomer. Requires Mg(2+) as cofactor.

The protein resides in the cytoplasm. An essential GTPase which binds GTP, GDP and possibly (p)ppGpp with moderate affinity, with high nucleotide exchange rates and a fairly low GTP hydrolysis rate. Plays a role in control of the cell cycle, stress response, ribosome biogenesis and in those bacteria that undergo differentiation, in morphogenesis control. The protein is GTPase Obg of Salmonella gallinarum (strain 287/91 / NCTC 13346).